The following is a 597-amino-acid chain: Nucleolar protein 58 (597 aa).

In terms of domain architecture, Nop spans 285–410; sequence IAPNMTELVG…LENNLRQLEG (126 aa). The tract at residues 452 to 597 is disordered; the sequence is AEAPKKPLIQ…KKKKKKSSKE (146 aa). Over residues 482 to 499 the composition is skewed to basic residues; that stretch reads KSKKDKKEKKEKKDKKAK. A compositionally biased stretch (basic and acidic residues) spans 532–551; that stretch reads IKEDGTLEILSKKDFKGKDA. Positions 552–561 are enriched in acidic residues; it reads EAEEEAEEEE. Basic residues predominate over residues 588–597; the sequence is KKKKKKSSKE.

It belongs to the NOP5/NOP56 family.

It is found in the nucleus. It localises to the nucleolus. Required for pre-18S rRNA processing. May bind microtubules. This Neurospora crassa (strain ATCC 24698 / 74-OR23-1A / CBS 708.71 / DSM 1257 / FGSC 987) protein is Nucleolar protein 58 (nop-58).